A 1087-amino-acid polypeptide reads, in one-letter code: Transcription factor AP2-Z (1087 aa).

Positions glycine 586–leucine 682 form a DNA-binding region, AP2.

The protein belongs to the AP2/ERF transcription factor family. AP2 subfamily.

It is found in the nucleus. Its subcellular location is the chromosome. Transcription factor which binds the 5'-[TC][AC]TG[AT]AC[AG]-3' motif. During the mosquito vector stage, plays an essential role in the zygote for de novo transcription of genes required for ookinete formation. The sequence is that of Transcription factor AP2-Z from Plasmodium berghei (strain Anka).